Consider the following 136-residue polypeptide: Selenoprotein M (136 aa).

A signal peptide spans 1–19 (MWLPLPLLLGLLQLQPILS). Residues cysteine 38 and selenocysteine 41 each act as nucleophile in the active site. The segment at residues 38–41 (CGGU) is a cross-link (cysteinyl-selenocysteine (Cys-Sec)). Selenocysteine 41 is a non-standard amino acid (selenocysteine). Positions 111–136 (SSPDAPVPAEFKMAPARASGDTKEDL) are disordered. A Prevents secretion from ER motif is present at residues 133 to 136 (KEDL).

The protein belongs to the selenoprotein M/F family.

The protein resides in the endoplasmic reticulum. Its function is as follows. May function as a thiol-disulfide oxidoreductase that participates in disulfide bond formation. In Xenopus laevis (African clawed frog), this protein is Selenoprotein M (selenom).